Consider the following 64-residue polypeptide: Copper-metallothionein (64 aa).

Ser-1 bears the N-acetylserine mark. The Cu(+) site is built by Cys-7, Cys-11, Cys-16, Cys-18, Cys-22, Cys-24, Cys-28, Cys-30, Cys-33, Cys-36, Cys-38, Cys-43, Cys-45, Cys-49, Cys-55, Cys-57, Cys-61, and Cys-63.

This sequence belongs to the metallothionein superfamily. Type 2 family.

Its function is as follows. The metallothioneins are involved in the cellular sequestration of toxic metal ions and regulation of essential trace elements. This isoform binds exclusively copper. This is Copper-metallothionein from Helix pomatia (Roman snail).